Reading from the N-terminus, the 217-residue chain is Protein-L-isoaspartate O-methyltransferase (217 aa).

The active site involves serine 64.

The protein belongs to the methyltransferase superfamily. L-isoaspartyl/D-aspartyl protein methyltransferase family.

It is found in the cytoplasm. It catalyses the reaction [protein]-L-isoaspartate + S-adenosyl-L-methionine = [protein]-L-isoaspartate alpha-methyl ester + S-adenosyl-L-homocysteine. Its function is as follows. Catalyzes the methyl esterification of L-isoaspartyl residues in peptides and proteins that result from spontaneous decomposition of normal L-aspartyl and L-asparaginyl residues. It plays a role in the repair and/or degradation of damaged proteins. This is Protein-L-isoaspartate O-methyltransferase from Rhodopseudomonas palustris (strain BisB5).